The following is a 338-amino-acid chain: TPR repeat-containing protein MJ0941 (338 aa).

TPR repeat units follow at residues 27-62 (LEAV…EPDF), 63-96 (YLAL…ESKN), 97-130 (PITW…ENRF), 131-164 (LSAF…TPNF), 165-198 (VPMW…KPHD), 199-232 (KNAL…LNVK), 268-301 (VALW…QPHY), and 302-335 (IKAL…IHKD).

This chain is TPR repeat-containing protein MJ0941, found in Methanocaldococcus jannaschii (strain ATCC 43067 / DSM 2661 / JAL-1 / JCM 10045 / NBRC 100440) (Methanococcus jannaschii).